The sequence spans 258 residues: Acetylglutamate kinase (258 aa).

Substrate contacts are provided by residues 44–45, arginine 66, and asparagine 158; that span reads GG. Residues 181-186 and 209-211 contribute to the ATP site; these read DVSGIL and IIT.

The protein belongs to the acetylglutamate kinase family. ArgB subfamily. In terms of assembly, homodimer.

Its subcellular location is the cytoplasm. It catalyses the reaction N-acetyl-L-glutamate + ATP = N-acetyl-L-glutamyl 5-phosphate + ADP. The protein operates within amino-acid biosynthesis; L-arginine biosynthesis; N(2)-acetyl-L-ornithine from L-glutamate: step 2/4. Catalyzes the ATP-dependent phosphorylation of N-acetyl-L-glutamate. This is Acetylglutamate kinase from Shigella flexneri.